The chain runs to 159 residues: MLTAPSLSRFKSPFISSPLKLPTLSSSFFTQKFHQTCRRRNSYPCIKAVDLDQNTVIAITVGVLSVAIGVGIPVFYETQIDNAAKRENTQPCFPCTGTGAQKCRFCMGTGSVTVELGGGETEVSRCINCDGAGGLTCTTCQGSGIQPRYLDRREFKDDD.

A chloroplast-targeting transit peptide spans 1-47; sequence MLTAPSLSRFKSPFISSPLKLPTLSSSFFTQKFHQTCRRRNSYPCIK. Residues 56–76 traverse the membrane as a helical segment; it reads VIAITVGVLSVAIGVGIPVFY. Residues 85-145 form a CR-type-like region; it reads KRENTQPCFP…TCTTCQGSGI (61 aa). CXXCXGXG motif repeat units lie at residues 92–99, 103–110, 126–133, and 137–144; these read CFPCTGTG, CRFCMGTG, CINCDGAG, and CTTCQGSG.

As to expression, expressed in source leaves. Lower levels of expression in fruits and stems.

The protein localises to the plastid. It localises to the chloroplast thylakoid membrane. Participates in determining harvest index (HI) by affecting source-sink carbon distribution. Up-regulates the conversion of fixed carbon to exportable sugars. The polypeptide is Protein SPA, chloroplastic (Solanum lycopersicum (Tomato)).